A 258-amino-acid polypeptide reads, in one-letter code: Deoxyribose-phosphate aldolase (258 aa).

Catalysis depends on aspartate 102, which acts as the Proton donor/acceptor. The Schiff-base intermediate with acetaldehyde role is filled by lysine 165. Lysine 199 acts as the Proton donor/acceptor in catalysis.

Belongs to the DeoC/FbaB aldolase family. DeoC type 2 subfamily.

Its subcellular location is the cytoplasm. The enzyme catalyses 2-deoxy-D-ribose 5-phosphate = D-glyceraldehyde 3-phosphate + acetaldehyde. It participates in carbohydrate degradation; 2-deoxy-D-ribose 1-phosphate degradation; D-glyceraldehyde 3-phosphate and acetaldehyde from 2-deoxy-alpha-D-ribose 1-phosphate: step 2/2. Its function is as follows. Catalyzes a reversible aldol reaction between acetaldehyde and D-glyceraldehyde 3-phosphate to generate 2-deoxy-D-ribose 5-phosphate. This is Deoxyribose-phosphate aldolase from Aliivibrio fischeri (strain ATCC 700601 / ES114) (Vibrio fischeri).